A 616-amino-acid polypeptide reads, in one-letter code: Protein cereblon (616 aa).

Disordered regions lie at residues 1 to 39, 63 to 137, and 182 to 220; these read MDEE…DDSV, FGPS…AMPR, and SQER…DIDM. Positions 11 to 32 are enriched in low complexity; that stretch reads AQEQEVAGSAGEAAAGPSGAEV. Over residues 96–107 the composition is skewed to acidic residues; it reads SEEDIVLDDGTE. Basic and acidic residues predominate over residues 183–192; that stretch reads QERRRSRNSD. The span at 194 to 203 shows a compositional bias: acidic residues; the sequence is VSPEAEDDEL. The segment covering 206-215 has biased composition (pro residues); it reads HPPPPPPRPP. A Lon N-terminal domain is found at 257-482; sequence HMLIFLHQYI…LIGGILKEET (226 aa). Residues 481-590 form the CULT domain; sequence ETLFYCRYCN…LAGSSVRIGK (110 aa). The Zn(2+) site is built by Cys-486, Cys-489, Cys-555, and Cys-558.

Belongs to the CRBN family. In terms of assembly, likely a component of a DCX (DDB1-CUL4-X-box) protein ligase complex. May interact with pic/DDB1. Post-translationally, ubiquitinated.

It is found in the nucleus. It functions in the pathway protein modification; protein ubiquitination. Substrate recognition component of a DCX (DDB1-CUL4-X-box) E3 protein ligase complex that mediates the ubiquitination and subsequent proteasomal degradation of target proteins. Has an essential role in mediating growth by negatively regulating insulin signaling. It also has a role in maintaining presynaptic function in the neuromuscular junction synapses of third-instar larvae. The protein is Protein cereblon of Drosophila pseudoobscura pseudoobscura (Fruit fly).